The following is a 354-amino-acid chain: Homeobox protein Nkx-2.4 (354 aa).

Positions 188–247 (RRKRRVLFSQAQVYELERRFKQQKYLSAPEREHLASMIHLTPTQVKIWFQNHRYKMKRQA) form a DNA-binding region, homeobox. The interval 245–329 (RQAKDKAAQQ…PALHGPGGGL (85 aa)) is disordered. Residues 262–272 (GPPPPPPPPSP) show a composition bias toward pro residues. A compositionally biased stretch (low complexity) spans 290–304 (GAGTPTPGQGGQQPQ).

It belongs to the NK-2 homeobox family. As to expression, in the embryo it is detected in the posterior hypothalamus and later in the head. In the adult it is detected only in testis.

The protein resides in the nucleus. In terms of biological role, probable transcription factor. This is Homeobox protein Nkx-2.4 (Nkx2-4) from Mus musculus (Mouse).